A 420-amino-acid polypeptide reads, in one-letter code: Serine/threonine-protein phosphatase 4 regulatory subunit 2-A (420 aa).

The segment at 157 to 420 (GNTSAFPDRN…ETADDNMEQD (264 aa)) is disordered. The span at 182–195 (SLSSNVATNGLPDS) shows a compositional bias: polar residues. Basic and acidic residues predominate over residues 196–210 (TESKEQASEQSERTV). A compositionally biased stretch (low complexity) spans 212 to 224 (ESSASEAESHSGA). Residues 229-250 (HRDDEDATHAETHEAKRLKFDK) are compositionally biased toward basic and acidic residues. Residues 251 to 266 (EEEEEEDDEEEDEDGD) show a composition bias toward acidic residues. The segment covering 267–276 (EIKKELDEPH) has biased composition (basic and acidic residues). The span at 278–296 (PCTSVAESSSDVPQSSTDV) shows a compositional bias: polar residues. The segment covering 318–332 (GVDRSTSEDSPDPSH) has biased composition (basic and acidic residues). The span at 346 to 364 (AEEEEEEESAEAQETEETN) shows a compositional bias: acidic residues. The segment covering 368 to 394 (SSSSNNSSDEGVSSAETPSASPSSSTE) has biased composition (low complexity). Acidic residues predominate over residues 411 to 420 (ETADDNMEQD).

This sequence belongs to the PPP4R2 family. Serine/threonine-protein phosphatase 4 (PP4) occurs in different assemblies of the catalytic and one or more regulatory subunits.

Regulatory subunit of serine/threonine-protein phosphatase 4 (PP4C). In Danio rerio (Zebrafish), this protein is Serine/threonine-protein phosphatase 4 regulatory subunit 2-A (ppp4r2a).